The sequence spans 151 residues: Large-conductance mechanosensitive channel (151 aa).

2 consecutive transmembrane segments (helical) span residues 12 to 32 and 71 to 91; these read GNIV…ALVT and VLLS…FLVV. The segment at 125–151 is disordered; the sequence is NSNSSGRHEAPGTAGTPPPNYGPRADT.

Belongs to the MscL family. As to quaternary structure, homopentamer.

It localises to the cell membrane. In terms of biological role, channel that opens in response to stretch forces in the membrane lipid bilayer. May participate in the regulation of osmotic pressure changes within the cell. The chain is Large-conductance mechanosensitive channel from Mycobacterium ulcerans (strain Agy99).